The primary structure comprises 368 residues: MRVIFTGGGTGGHIYPIMAIIERLKERGISKNDEILFVGTQKGLESKIVPAAGVNFETIQIQGFNRKHPLKNFETIKLFFQATKSARKILQEFKPDVVLGTGGYVSGAMVYEAAKMHIPTMIHESNSVVGLANKFLGHYVDKICYTFDDAAKEFPEKKKLVKTGNPRSQQVLGLHEDKVNLQKELGLNPQMPTVLVFGGSRGALAINRIMLKSLMELKKKPYQIIWATGTYYFDSVQKKLEGVDYGDNIKILPYIQNMPALLPEMTCVVSRSGATSIAEFTALGVPVILIPSPNVTHNHQMKNALDLQKAGAALVIPEDDLNPNNFVSSIDHILLDEKYANEMSEASKALGVPDASDQVIKVMEEISR.

UDP-N-acetyl-alpha-D-glucosamine is bound by residues 10-12, Asn126, Ser200, Ile255, and Gln300; that span reads TGG.

It belongs to the glycosyltransferase 28 family. MurG subfamily.

It is found in the cell membrane. It carries out the reaction Mur2Ac(oyl-L-Ala-gamma-D-Glu-L-Lys-D-Ala-D-Ala)-di-trans,octa-cis-undecaprenyl diphosphate + UDP-N-acetyl-alpha-D-glucosamine = beta-D-GlcNAc-(1-&gt;4)-Mur2Ac(oyl-L-Ala-gamma-D-Glu-L-Lys-D-Ala-D-Ala)-di-trans,octa-cis-undecaprenyl diphosphate + UDP + H(+). It participates in cell wall biogenesis; peptidoglycan biosynthesis. Functionally, cell wall formation. Catalyzes the transfer of a GlcNAc subunit on undecaprenyl-pyrophosphoryl-MurNAc-pentapeptide (lipid intermediate I) to form undecaprenyl-pyrophosphoryl-MurNAc-(pentapeptide)GlcNAc (lipid intermediate II). This chain is UDP-N-acetylglucosamine--N-acetylmuramyl-(pentapeptide) pyrophosphoryl-undecaprenol N-acetylglucosamine transferase, found in Lactobacillus acidophilus (strain ATCC 700396 / NCK56 / N2 / NCFM).